Consider the following 269-residue polypeptide: Proenkephalin-A (269 aa).

Residues 1-24 (MAQFLRLCIWLLALGSCLLATVQA) form the signal peptide. 3 disulfides stabilise this stretch: Cys-26-Cys-48, Cys-30-Cys-52, and Cys-33-Cys-65. Residues 165–191 (DNRAKDSHQQESTNNDEDSTSKRYGGF) are disordered. 2 propeptides span residues 198 to 209 (SPQLEDEAKELQ) and 219 to 229 (VGRPEWWMDYQ). Ser-253 carries the post-translational modification Phosphoserine.

Belongs to the opioid neuropeptide precursor family. Proenkephalin-A is cleaved by CTSL to generate Met-enkephalin. In terms of processing, processed and degraded by ACE. Post-translationally, probably cleaved by ACE. Processed by ACE to generate Met-enkephalin in the nucleus accumbens of the brain. In terms of processing, the N-terminal domain contains 6 conserved cysteines thought to be involved in disulfide bonding and/or processing. Expressed in brain, heart and testis.

The protein resides in the secreted. It is found in the cytoplasmic vesicle. Its subcellular location is the secretory vesicle. It localises to the chromaffin granule lumen. Neuropeptide that competes with and mimic the effects of opiate drugs. They play a role in a number of physiologic functions, including pain perception and responses to stress. Functionally, met-enkephalin-Arg-Phe neuropeptide acts as a strong ligand of Mu-type opioid receptor OPRM1. Met-enkephalin-Arg-Phe-binding to OPRM1 in the nucleus accumbens of the brain increases activation of OPRM1, leading to long-term synaptic depression of glutamate release. Its function is as follows. Increases glutamate release in the striatum and decreases GABA concentration in the striatum. In terms of biological role, increases glutamate release in the striatum. In Rattus norvegicus (Rat), this protein is Proenkephalin-A (Penk).